We begin with the raw amino-acid sequence, 448 residues long: Deoxyguanosinetriphosphate triphosphohydrolase-like protein (448 aa).

Residues 1–26 (MQINSSWQERFLADPPREKDHRPPFR) are disordered. Basic and acidic residues predominate over residues 11–26 (FLADPPREKDHRPPFR). One can recognise an HD domain in the interval 59-272 (RLTHSLEVAQ…MELADDIAYA (214 aa)).

The protein belongs to the dGTPase family. Type 2 subfamily.

This Histophilus somni (strain 129Pt) (Haemophilus somnus) protein is Deoxyguanosinetriphosphate triphosphohydrolase-like protein.